Consider the following 673-residue polypeptide: MSIILLDPRTINRIAAGEVIECPASVVKELVENSIDAKATAISITIERGGRNLIIVSDNGIGIKKEDMEIAFARHATSKLPDGDLTKVRSLGFRGEGLTSIAAVGKVKMVSKYRDSDTAWLMVFEGGEKTQELTPDALSCGTYIEVRDLFFATPNRLKFLRTEKAEVQSIIDMMNKLAMVNHNVMFSLFVDNKQVFKYLTQQSNIDRLSEIKTLGMEFCKNSLPVNVKEEQIQLSGYIGSPTLSRGKSSLIYTFVNSRPVYDNLLIGAVRYAYSDFIEKDKYPVVVLYLDIPCDQVDANVHPNKSEVRFQDKKLVYRTVVNAIKEVLSINLNTKLKSISEFENDHFVHASMVNSRNIGNSVSSEFFKCFQNRKPLLNNDVQKYSSKNVETDDQSLLDTNVSFCTDSKMITNKLKEERVYENSREHINKGDSKIEVSNFDILGEKKNFVNLANNLLQESPSIDSGKFNTSKKVPSDSLIDTYPLGYALCQIHSRYIISQTQDSIVIIDQHAAHERLTYEYMKQVMAKEGIKRQILLIPEIIEMNNHLDLELLVEYKEKLLKLGLLIEPLGNLSVIVREVPALFGSFDVKSLIINIVDSIMEVGDTLFLDDKIKDICGTIACYSSIRSGRKLKIEEMNAILRNMENTAHSGQCNHGRPTYVELNLVEIDRLFSRR.

The protein belongs to the DNA mismatch repair MutL/HexB family.

In terms of biological role, this protein is involved in the repair of mismatches in DNA. It is required for dam-dependent methyl-directed DNA mismatch repair. May act as a 'molecular matchmaker', a protein that promotes the formation of a stable complex between two or more DNA-binding proteins in an ATP-dependent manner without itself being part of a final effector complex. The sequence is that of DNA mismatch repair protein MutL from Ehrlichia chaffeensis (strain ATCC CRL-10679 / Arkansas).